Consider the following 222-residue polypeptide: N-(5'-phosphoribosyl)anthranilate isomerase (222 aa).

This sequence belongs to the TrpF family.

The enzyme catalyses N-(5-phospho-beta-D-ribosyl)anthranilate = 1-(2-carboxyphenylamino)-1-deoxy-D-ribulose 5-phosphate. It participates in amino-acid biosynthesis; L-tryptophan biosynthesis; L-tryptophan from chorismate: step 3/5. In Brevibacillus brevis (strain 47 / JCM 6285 / NBRC 100599), this protein is N-(5'-phosphoribosyl)anthranilate isomerase.